Here is a 118-residue protein sequence, read N- to C-terminus: Hydrogenase maturation factor HypA (118 aa).

His-2 serves as a coordination point for Ni(2+). Residues Cys-73, Cys-76, Cys-93, and Cys-96 each contribute to the Zn(2+) site.

The protein belongs to the HypA/HybF family.

Involved in the maturation of [NiFe] hydrogenases. Required for nickel insertion into the metal center of the hydrogenase. This chain is Hydrogenase maturation factor HypA, found in Lawsonia intracellularis (strain PHE/MN1-00).